Consider the following 362-residue polypeptide: Phosphoserine aminotransferase (362 aa).

Residue Arg-42 coordinates L-glutamate. Pyridoxal 5'-phosphate contacts are provided by residues Ala-76 to Arg-77, Trp-102, Thr-154, Asp-174, and Gln-197. Lys-198 bears the N6-(pyridoxal phosphate)lysine mark. Asn-239–Thr-240 serves as a coordination point for pyridoxal 5'-phosphate.

The protein belongs to the class-V pyridoxal-phosphate-dependent aminotransferase family. SerC subfamily. As to quaternary structure, homodimer. Pyridoxal 5'-phosphate is required as a cofactor.

Its subcellular location is the cytoplasm. It carries out the reaction O-phospho-L-serine + 2-oxoglutarate = 3-phosphooxypyruvate + L-glutamate. The catalysed reaction is 4-(phosphooxy)-L-threonine + 2-oxoglutarate = (R)-3-hydroxy-2-oxo-4-phosphooxybutanoate + L-glutamate. The protein operates within amino-acid biosynthesis; L-serine biosynthesis; L-serine from 3-phospho-D-glycerate: step 2/3. Its pathway is cofactor biosynthesis; pyridoxine 5'-phosphate biosynthesis; pyridoxine 5'-phosphate from D-erythrose 4-phosphate: step 3/5. Its function is as follows. Catalyzes the reversible conversion of 3-phosphohydroxypyruvate to phosphoserine and of 3-hydroxy-2-oxo-4-phosphonooxybutanoate to phosphohydroxythreonine. This chain is Phosphoserine aminotransferase, found in Buchnera aphidicola subsp. Cinara cedri (strain Cc).